Reading from the N-terminus, the 164-residue chain is MIPNRKIQLSLFAVIIVFETLLNQVYAMELDEATRTVTLEESGKTITLTPEQVKRGKRLFNNSCAQCHNGGITKTNPNIGLDPESLSGATPVRDNIRNLIEYIKDPTSYDGATSIAELHPSIKSAEIFPKMRNLTDEDLFAIAGHILIQPKIAAEKWGGGKIYY.

A signal peptide spans 1-27; the sequence is MIPNRKIQLSLFAVIIVFETLLNQVYA. The heme c site is built by cysteine 64, cysteine 67, histidine 68, and methionine 131.

The protein belongs to the cytochrome c family. PsbV subfamily. PSII is composed of 1 copy each of membrane proteins PsbA, PsbB, PsbC, PsbD, PsbE, PsbF, PsbH, PsbI, PsbJ, PsbK, PsbL, PsbM, PsbT, PsbY, PsbZ, Psb30/Ycf12, at least 3 peripheral proteins of the oxygen-evolving complex and a large number of cofactors. It forms dimeric complexes. The extrinsic subunits in red algae are PsbO (OEC33), PsbQ', cytochrome c-550 and PsbU. Heme c is required as a cofactor.

The protein localises to the plastid. It localises to the chloroplast thylakoid membrane. In terms of biological role, one of the extrinsic, lumenal subunits of photosystem II (PSII). PSII is a light-driven water plastoquinone oxidoreductase, using light energy to abstract electrons from H(2)O, generating a proton gradient subsequently used for ATP formation. The extrinsic proteins stabilize the structure of photosystem II oxygen-evolving complex (OEC), the ion environment of oxygen evolution and protect the OEC against heat-induced inactivation. The sequence is that of Photosystem II extrinsic protein V from Gracilaria tenuistipitata var. liui (Red alga).